The primary structure comprises 359 residues: Methyltransferase eqxD (359 aa).

Residues 198-199 (GG), Asp224, 248-249 (SF), Arg264, and Arg265 each bind S-adenosyl-L-methionine.

The protein belongs to the class I-like SAM-binding methyltransferase superfamily. Cation-independent O-methyltransferase family.

It catalyses the reaction trichosetin + S-adenosyl-L-methionine = equisetin + S-adenosyl-L-homocysteine + H(+). Its pathway is mycotoxin biosynthesis. Methyltransferase; part of the gene cluster that mediates the biosynthesis of equisetin, a trans-fused decalin-containing tetramic acid with antimicrobial activity. The PKS module of eqxS together with the enoylreductase eqxC catalyze the formation of the polyketide unit which is then conjugated to L-serine by the condensation domain of the eqxS NRPS module. Activity of the Dieckmann cyclase domain (RED) results in release of the Dieckmann product intermediate. Diels-Alderase eqx3 is involved in endo-selective Diels-Alder cycloaddition to form the decalin ring, leading to the production of N-desmethylequisetin also called trichosetin. Subsequent N-methylation is carried out by eqxD to give equisetin. This Fusarium heterosporum protein is Methyltransferase eqxD.